A 145-amino-acid polypeptide reads, in one-letter code: Ribonuclease HI (145 aa).

An RNase H type-1 domain is found at 1 to 142 (MNQTVYLYTD…ADDLANRGAA (142 aa)). Residues aspartate 10, glutamate 48, aspartate 70, and aspartate 134 each coordinate Mg(2+).

The protein belongs to the RNase H family. In terms of assembly, monomer. Requires Mg(2+) as cofactor.

It localises to the cytoplasm. The catalysed reaction is Endonucleolytic cleavage to 5'-phosphomonoester.. In terms of biological role, endonuclease that specifically degrades the RNA of RNA-DNA hybrids. The protein is Ribonuclease HI of Neisseria meningitidis serogroup A / serotype 4A (strain DSM 15465 / Z2491).